Reading from the N-terminus, the 567-residue chain is Signal transducer and activator of transcription b (567 aa).

The 100-residue stretch at 449-548 (WYDGLVYGFC…LGGRNKPRIR (100 aa)) folds into the SH2 domain.

This sequence belongs to the transcription factor STAT family. May interact with sodium-dependent transporter snf-12; the interaction is probably direct.

The protein resides in the cytoplasm. It is found in the nucleus. The protein localises to the vesicle. In terms of biological role, carries out a dual function: signal transduction and activation of transcription. Required, in concert with transcription factor elt-3, for up-regulation of the vacuolar H(+)-ATPase and acceleration of lysosome maturation at molt. As part of the innate immune response to molting and injury of the adult epidermis, positively regulates the expression of epidermal antimicrobial peptides, such as nlp-29. Through positively modulating the expression of epidermal antimicrobial peptides, such as nlp-29, plays a role in resistance to fungal infection and in the response to physical wounding and phorbol ester PMA treatment. Functions cell autonomously in the epidermis, in concert with sodium-dependent transporter snf-12, probably acting at vesicular membranes, downstream of a p38 MAPK/pmk-1 pathway. This chain is Signal transducer and activator of transcription b, found in Caenorhabditis elegans.